We begin with the raw amino-acid sequence, 270 residues long: MISTLRRAVFLRRFPAVVSPIKRAFSSRIDDEFDPQIMNINELNQEMQSIFGQEPSPDGPGTMDFSELKSSKIEPLRSKNIDFRQQIEYHKSTHSSKNDSQAIEQYAKVASDMSKLTHVGIAGEAQMVDVSSKDNSKRTALACCKVILGKRVFDLVLANQMGKGDVLGVAKIAGINGAKQTSSLIPLCHNIALTHVRVDLRLNPEDFSVDIEGEASCTGKTGVEMEAMTAVSVAGLTVYDMCKAASKDISITDVRLERKTGGKSGSWSRL.

A mitochondrion-targeting transit peptide spans 1 to 32; it reads MISTLRRAVFLRRFPAVVSPIKRAFSSRIDDE. Substrate-binding positions include 187–189 and 225–226; these read LCH and ME. D240 is a catalytic residue.

The protein belongs to the MoaC family. In terms of assembly, homohexamer. In terms of tissue distribution, abundantly expressed in the roots.

It is found in the mitochondrion matrix. The enzyme catalyses (8S)-3',8-cyclo-7,8-dihydroguanosine 5'-triphosphate = cyclic pyranopterin phosphate + diphosphate. The protein operates within cofactor biosynthesis; molybdopterin biosynthesis. Functionally, catalyzes the conversion of (8S)-3',8-cyclo-7,8-dihydroguanosine 5'-triphosphate to cyclic pyranopterin monophosphate (cPMP). The sequence is that of Cyclic pyranopterin monophosphate synthase, mitochondrial (CNX3) from Arabidopsis thaliana (Mouse-ear cress).